The sequence spans 131 residues: UPF0102 protein YraN (131 aa).

A compositionally biased stretch (polar residues) spans 1-19 (MATVPTRSGSPRQLTTKQT). The segment at 1–20 (MATVPTRSGSPRQLTTKQTG) is disordered.

It belongs to the UPF0102 family.

This is UPF0102 protein YraN from Escherichia coli O8 (strain IAI1).